A 121-amino-acid polypeptide reads, in one-letter code: MLNRKDQRLRRSKQTRVRIALQKVARLTVFRSNLHIYASVISDDGSKVLASASTAEKEVRARLGAAGKGGNTEAAALIGKRIAERAKAAGIESVAFDRGGFAYHGRVKALAEAAREAGLQF.

The protein belongs to the universal ribosomal protein uL18 family. As to quaternary structure, part of the 50S ribosomal subunit; part of the 5S rRNA/L5/L18/L25 subcomplex. Contacts the 5S and 23S rRNAs.

This is one of the proteins that bind and probably mediate the attachment of the 5S RNA into the large ribosomal subunit, where it forms part of the central protuberance. The polypeptide is Large ribosomal subunit protein uL18 (Methylibium petroleiphilum (strain ATCC BAA-1232 / LMG 22953 / PM1)).